We begin with the raw amino-acid sequence, 134 residues long: Small ribosomal subunit protein uS8c (134 aa).

It belongs to the universal ribosomal protein uS8 family. Part of the 30S ribosomal subunit.

The protein resides in the plastid. It is found in the chloroplast. Its function is as follows. One of the primary rRNA binding proteins, it binds directly to 16S rRNA central domain where it helps coordinate assembly of the platform of the 30S subunit. The sequence is that of Small ribosomal subunit protein uS8c (rps8) from Aethionema cordifolium (Lebanon stonecress).